We begin with the raw amino-acid sequence, 196 residues long: Peptide deformylase (196 aa).

Residues C103 and H145 each contribute to the Fe cation site. The active site involves E146. Fe cation is bound at residue H149.

The protein belongs to the polypeptide deformylase family. Fe(2+) is required as a cofactor.

It catalyses the reaction N-terminal N-formyl-L-methionyl-[peptide] + H2O = N-terminal L-methionyl-[peptide] + formate. Its function is as follows. Removes the formyl group from the N-terminal Met of newly synthesized proteins. Requires at least a dipeptide for an efficient rate of reaction. N-terminal L-methionine is a prerequisite for activity but the enzyme has broad specificity at other positions. The chain is Peptide deformylase from Rhodococcus opacus (strain B4).